The sequence spans 356 residues: 3-isopropylmalate dehydrogenase (356 aa).

73 to 86 is a binding site for NAD(+); sequence GTQYDGLPREKRPE. 4 residues coordinate substrate: Arg93, Arg103, Arg131, and Asp220. Mg(2+)-binding residues include Asp220, Asp244, and Asp248. 278 to 290 serves as a coordination point for NAD(+); sequence GSAPDIAGKGIAN.

The protein belongs to the isocitrate and isopropylmalate dehydrogenases family. LeuB type 1 subfamily. Homodimer. Mg(2+) is required as a cofactor. Mn(2+) serves as cofactor.

It localises to the cytoplasm. It catalyses the reaction (2R,3S)-3-isopropylmalate + NAD(+) = 4-methyl-2-oxopentanoate + CO2 + NADH. Its pathway is amino-acid biosynthesis; L-leucine biosynthesis; L-leucine from 3-methyl-2-oxobutanoate: step 3/4. Functionally, catalyzes the oxidation of 3-carboxy-2-hydroxy-4-methylpentanoate (3-isopropylmalate) to 3-carboxy-4-methyl-2-oxopentanoate. The product decarboxylates to 4-methyl-2 oxopentanoate. In Nitrosomonas europaea (strain ATCC 19718 / CIP 103999 / KCTC 2705 / NBRC 14298), this protein is 3-isopropylmalate dehydrogenase.